Reading from the N-terminus, the 239-residue chain is Leucyl/phenylalanyl-tRNA--protein transferase (239 aa).

It belongs to the L/F-transferase family.

The protein localises to the cytoplasm. The enzyme catalyses N-terminal L-lysyl-[protein] + L-leucyl-tRNA(Leu) = N-terminal L-leucyl-L-lysyl-[protein] + tRNA(Leu) + H(+). The catalysed reaction is N-terminal L-arginyl-[protein] + L-leucyl-tRNA(Leu) = N-terminal L-leucyl-L-arginyl-[protein] + tRNA(Leu) + H(+). It catalyses the reaction L-phenylalanyl-tRNA(Phe) + an N-terminal L-alpha-aminoacyl-[protein] = an N-terminal L-phenylalanyl-L-alpha-aminoacyl-[protein] + tRNA(Phe). Functionally, functions in the N-end rule pathway of protein degradation where it conjugates Leu, Phe and, less efficiently, Met from aminoacyl-tRNAs to the N-termini of proteins containing an N-terminal arginine or lysine. This is Leucyl/phenylalanyl-tRNA--protein transferase from Aliivibrio fischeri (strain ATCC 700601 / ES114) (Vibrio fischeri).